The chain runs to 255 residues: Trans-aconitate 2-methyltransferase (255 aa).

This sequence belongs to the methyltransferase superfamily. Tam family.

Its subcellular location is the cytoplasm. The enzyme catalyses trans-aconitate + S-adenosyl-L-methionine = (E)-3-(methoxycarbonyl)pent-2-enedioate + S-adenosyl-L-homocysteine. In terms of biological role, catalyzes the S-adenosylmethionine monomethyl esterification of trans-aconitate. The protein is Trans-aconitate 2-methyltransferase of Mycolicibacterium gilvum (strain PYR-GCK) (Mycobacterium gilvum (strain PYR-GCK)).